A 403-amino-acid polypeptide reads, in one-letter code: D-galactonate dehydratase family member Mmwyl1_0037 (403 aa).

2 residues coordinate substrate: Asn-37 and His-122. Tyr-159 acts as the Proton donor/acceptor in catalysis. Position 211 (Asp-211) interacts with Mg(2+). His-213 serves as the catalytic Proton donor/acceptor. Mg(2+)-binding residues include Glu-237 and Glu-263. The substrate site is built by Glu-263, Arg-284, His-313, Asp-317, and Glu-340.

This sequence belongs to the mandelate racemase/muconate lactonizing enzyme family. GalD subfamily. Mg(2+) is required as a cofactor.

It carries out the reaction D-mannonate = 2-dehydro-3-deoxy-D-gluconate + H2O. Functionally, has low D-mannonate dehydratase activity (in vitro), suggesting that this is not a physiological substrate and that it has no significant role in D-mannonate degradation in vivo. Has no detectable activity with a panel of 70 other acid sugars (in vitro). This Marinomonas sp. (strain MWYL1) protein is D-galactonate dehydratase family member Mmwyl1_0037.